A 96-amino-acid chain; its full sequence is Protein RnfH (96 aa).

The protein belongs to the UPF0125 (RnfH) family.

The sequence is that of Protein RnfH from Cronobacter sakazakii (strain ATCC BAA-894) (Enterobacter sakazakii).